A 777-amino-acid chain; its full sequence is Serine/threonine-protein kinase PLK4 (777 aa).

Positions 14–268 constitute a Protein kinase domain; sequence YEVQHLLGKG…LEQVLRHPFL (255 aa). ATP contacts are provided by residues 20 to 28 and lysine 43; that span reads LGKGGFASV. Aspartate 139 acts as the Proton acceptor in catalysis. Over residues 371-381 the composition is skewed to polar residues; that stretch reads TNNLAPFTSDS. A disordered region spans residues 371-390; sequence TNNLAPFTSDSDMIPSPVGE. In terms of domain architecture, Cryptic POLO box 1 (CPB1) spans 390 to 507; the sequence is EKRLLMPPLE…ARFVGLVKSK (118 aa). Residues 508–611 enclose the Cryptic POLO box 2 (CPB2) domain; it reads TPKITFFSSL…GRRPAADMHA (104 aa). Residues 669-748 enclose the POLO box domain; the sequence is PIKRITVPEI…MPQLQMKLKC (80 aa).

Belongs to the protein kinase superfamily. Ser/Thr protein kinase family. CDC5/Polo subfamily. As to quaternary structure, homodimer. Post-translationally, ubiquitinated by the SCF(Slimb) ubiquitin ligase complex; leading to its degradation by the proteasome during interphase and regulating centriole number and ensuring the block to centriole reduplication.

The protein localises to the cytoplasm. It localises to the cytoskeleton. Its subcellular location is the microtubule organizing center. The protein resides in the centrosome. It is found in the centriole. It catalyses the reaction L-seryl-[protein] + ATP = O-phospho-L-seryl-[protein] + ADP + H(+). It carries out the reaction L-threonyl-[protein] + ATP = O-phospho-L-threonyl-[protein] + ADP + H(+). In terms of biological role, serine/threonine-protein kinase that plays a central role in centriole duplication. Able to trigger procentriole formation on the surface of the mother centriole cylinder, using mother centriole as a platform, leading to the recruitment of centriole biogenesis proteins such as sas-6. When overexpressed, it is able to induce centrosome amplification through the simultaneous generation of multiple procentrioles adjoining each parental centriole during S phase. Centrosome amplification following overexpression can initiate tumorigenesis, highlighting the importance of centrosome regulation in cancers. The polypeptide is Serine/threonine-protein kinase PLK4 (SAK) (Drosophila persimilis (Fruit fly)).